Reading from the N-terminus, the 257-residue chain is DNA-binding and peroxide stress resistance protein YaaA (257 aa).

Residues 35–66 (IGIARKLSAPQIGKLMSISDKLADLNATRFHD) carry the Helix-hairpin-helix motif.

The protein belongs to the UPF0246 family.

The protein resides in the cytoplasm. In terms of biological role, protects bacteria from neutrophil-related defense upon infection of mammals. Binds DNA. The polypeptide is DNA-binding and peroxide stress resistance protein YaaA (Klebsiella pneumoniae subsp. pneumoniae (strain HS11286)).